A 507-amino-acid polypeptide reads, in one-letter code: Maturase K (507 aa).

Belongs to the intron maturase 2 family. MatK subfamily.

Its subcellular location is the plastid. The protein resides in the chloroplast. Usually encoded in the trnK tRNA gene intron. Probably assists in splicing its own and other chloroplast group II introns. The sequence is that of Maturase K from Humulus lupulus (European hop).